The chain runs to 182 residues: Keratin, type II cytoskeletal 60 kDa, component III (182 aa).

The 63-residue stretch at 1–63 (ERGELALKDA…KLLEGEECRL (63 aa)) folds into the IF rod domain. The segment at 1–63 (ERGELALKDA…KLLEGEECRL (63 aa)) is coil 2. Residues 63–182 (LSGEGVGPVN…TSSSRKSFKS (120 aa)) form a tail region. The disordered stretch occupies residues 157 to 182 (FGSGGGSSSSVKFVSTTSSSRKSFKS). Over residues 164–182 (SSSVKFVSTTSSSRKSFKS) the composition is skewed to low complexity.

This sequence belongs to the intermediate filament family. As to quaternary structure, heterotetramer of two type I and two type II keratins.

This chain is Keratin, type II cytoskeletal 60 kDa, component III, found in Bos taurus (Bovine).